Reading from the N-terminus, the 232-residue chain is ATP-dependent dethiobiotin synthetase BioD (232 aa).

G16–V21 serves as a coordination point for ATP. T20 contacts Mg(2+). Residue K41 is part of the active site. T45 provides a ligand contact to substrate. ATP-binding positions include D52, E111–G114, N171–Q172, P200–S202, and E207. Positions 52 and 111 each coordinate Mg(2+).

Belongs to the dethiobiotin synthetase family. In terms of assembly, homodimer. Requires Mg(2+) as cofactor.

It is found in the cytoplasm. It catalyses the reaction (7R,8S)-7,8-diammoniononanoate + CO2 + ATP = (4R,5S)-dethiobiotin + ADP + phosphate + 3 H(+). It carries out the reaction (7R,8S)-8-amino-7-(carboxyamino)nonanoate + ATP = (4R,5S)-dethiobiotin + ADP + phosphate + H(+). The protein operates within cofactor biosynthesis; biotin biosynthesis; biotin from 7,8-diaminononanoate: step 1/2. Its function is as follows. Catalyzes a mechanistically unusual reaction, the ATP-dependent insertion of CO2 between the N7 and N8 nitrogen atoms of 7,8-diaminopelargonic acid (DAPA, also called 7,8-diammoniononanoate) to form a ureido ring. This archaea does not encode bioA (which catalyzes the formation of the precursor for this reaction in the cannonical pathway), instead it encodes bioU, which replaces bioA and also performs the first half of the cannonical BioD reaction. Thus in this archaea BioD has a different substrate. In Haloferax mediterranei (strain ATCC 33500 / DSM 1411 / JCM 8866 / NBRC 14739 / NCIMB 2177 / R-4) (Halobacterium mediterranei), this protein is ATP-dependent dethiobiotin synthetase BioD.